A 175-amino-acid chain; its full sequence is ATP synthase subunit b (175 aa).

The helical transmembrane segment at 20-40 (LIFWTAITFVIVLLILKKIAW) threads the bilayer.

It belongs to the ATPase B chain family. In terms of assembly, F-type ATPases have 2 components, F(1) - the catalytic core - and F(0) - the membrane proton channel. F(1) has five subunits: alpha(3), beta(3), gamma(1), delta(1), epsilon(1). F(0) has four main subunits: a(1), b(2) and c(10-14). The alpha and beta chains form an alternating ring which encloses part of the gamma chain. F(1) is attached to F(0) by a central stalk formed by the gamma and epsilon chains, while a peripheral stalk is formed by the delta and b chains.

The protein localises to the cell inner membrane. F(1)F(0) ATP synthase produces ATP from ADP in the presence of a proton or sodium gradient. F-type ATPases consist of two structural domains, F(1) containing the extramembraneous catalytic core and F(0) containing the membrane proton channel, linked together by a central stalk and a peripheral stalk. During catalysis, ATP synthesis in the catalytic domain of F(1) is coupled via a rotary mechanism of the central stalk subunits to proton translocation. Its function is as follows. Component of the F(0) channel, it forms part of the peripheral stalk, linking F(1) to F(0). The polypeptide is ATP synthase subunit b (Chlorobium chlorochromatii (strain CaD3)).